The chain runs to 443 residues: UDP-N-acetylmuramate--L-alanine ligase (443 aa).

111–117 (GAHGKTS) lines the ATP pocket.

Belongs to the MurCDEF family.

Its subcellular location is the cytoplasm. It carries out the reaction UDP-N-acetyl-alpha-D-muramate + L-alanine + ATP = UDP-N-acetyl-alpha-D-muramoyl-L-alanine + ADP + phosphate + H(+). The protein operates within cell wall biogenesis; peptidoglycan biosynthesis. In terms of biological role, cell wall formation. The protein is UDP-N-acetylmuramate--L-alanine ligase of Ligilactobacillus salivarius (strain UCC118) (Lactobacillus salivarius).